An 800-amino-acid chain; its full sequence is Phenylalanine--tRNA ligase beta subunit (800 aa).

In terms of domain architecture, tRNA-binding spans 39-154 (TKDIKKLVVG…EAVKPGTDAL (116 aa)). Residues 408-483 (SFVTPIEITA…RIYGYDEIPS (76 aa)) form the B5 domain. Mg(2+)-binding residues include Asp461, Asp467, Glu470, and Glu471. Residues 708–800 (PRFPGVTRDI…ALKKHGAIIR (93 aa)) form the FDX-ACB domain.

The protein belongs to the phenylalanyl-tRNA synthetase beta subunit family. Type 1 subfamily. As to quaternary structure, tetramer of two alpha and two beta subunits. Requires Mg(2+) as cofactor.

It localises to the cytoplasm. The enzyme catalyses tRNA(Phe) + L-phenylalanine + ATP = L-phenylalanyl-tRNA(Phe) + AMP + diphosphate + H(+). The protein is Phenylalanine--tRNA ligase beta subunit of Staphylococcus epidermidis (strain ATCC 12228 / FDA PCI 1200).